The primary structure comprises 157 residues: uncharacterized protein (157 aa).

Residues 1-30 (MLPEQGPQPSTMPLWCLLAACTSLPRQAAT) form the signal peptide.

The protein localises to the secreted. This is an uncharacterized protein from Homo sapiens (Human).